The primary structure comprises 327 residues: E3 ubiquitin-protein ligase ZNRF4 (327 aa).

The signal sequence occupies residues 1-28 (MARFAWTRVAPVALVTFWLVLSLSPTDA). Over 29–150 (QVNLSSVDFL…EPCPDPECHP (122 aa)) the chain is Lumenal. Residue N31 is glycosylated (N-linked (GlcNAc...) asparagine). A helical transmembrane segment spans residues 151-171 (VVVASWALARALALAASTLFV). Topologically, residues 172-327 (LRQLWPWVRG…AQSEATSELS (156 aa)) are cytoplasmic. Residues 209 to 252 (CAICLDDYEEGERLKILPCAHAYHCRCIDPWFSRAAQRSCPLCK) form an RING-type; atypical zinc finger. Over residues 256 to 265 (ASTHDGSTDG) the composition is skewed to polar residues. Residues 256 to 279 (ASTHDGSTDGSVGGEEPPLPGHRP) form a disordered region.

In terms of assembly, interacts with CANX. In terms of tissue distribution, expressed exclusively in spermatids (at protein level).

The protein resides in the endoplasmic reticulum membrane. It carries out the reaction S-ubiquitinyl-[E2 ubiquitin-conjugating enzyme]-L-cysteine + [acceptor protein]-L-lysine = [E2 ubiquitin-conjugating enzyme]-L-cysteine + N(6)-ubiquitinyl-[acceptor protein]-L-lysine.. It functions in the pathway protein modification; protein ubiquitination. Its function is as follows. E3 ubiquitin-protein ligase that acts as a negative regulator of NOD2 signaling by mediating ubiquitination and degradation of RIPK2. Also catalyzes ubiquitination and proteasomal degradation of CANX within the endoplasmic reticulum. Could have a role in spermatogenesis. This chain is E3 ubiquitin-protein ligase ZNRF4, found in Mus musculus (Mouse).